We begin with the raw amino-acid sequence, 578 residues long: Arginine--tRNA ligase (578 aa).

A 'HIGH' region motif is present at residues 122–132; sequence PNLAKEMHVGH.

Belongs to the class-I aminoacyl-tRNA synthetase family. As to quaternary structure, monomer.

Its subcellular location is the cytoplasm. The catalysed reaction is tRNA(Arg) + L-arginine + ATP = L-arginyl-tRNA(Arg) + AMP + diphosphate. In Pseudoalteromonas atlantica (strain T6c / ATCC BAA-1087), this protein is Arginine--tRNA ligase.